The sequence spans 193 residues: Ion-translocating oxidoreductase complex subunit A (193 aa).

6 consecutive transmembrane segments (helical) span residues 5–25, 39–59, 67–87, 102–122, 134–154, and 171–191; these read LLLL…FLGL, IGMG…AYLV, LGIE…VVQF, LLGI…VALL, IIYG…FASM, and SIAM…TGLV.

The protein belongs to the NqrDE/RnfAE family. In terms of assembly, the complex is composed of six subunits: RnfA, RnfB, RnfC, RnfD, RnfE and RnfG.

The protein localises to the cell inner membrane. In terms of biological role, part of a membrane-bound complex that couples electron transfer with translocation of ions across the membrane. The polypeptide is Ion-translocating oxidoreductase complex subunit A (Vibrio cholerae serotype O1 (strain ATCC 39315 / El Tor Inaba N16961)).